Here is a 526-residue protein sequence, read N- to C-terminus: GMP synthase [glutamine-hydrolyzing] (526 aa).

One can recognise a Glutamine amidotransferase type-1 domain in the interval 8 to 208 (CILIIDFGSQ…AVDICRCEVT (201 aa)). The Nucleophile role is filled by Cys-85. Residues His-182 and Glu-184 contribute to the active site. The 193-residue stretch at 209-401 (WKPVYIVKNI…LGLPLNVVNQ (193 aa)) folds into the GMPS ATP-PPase domain. Residue 236 to 242 (SGGIDSL) participates in ATP binding.

In terms of assembly, homodimer.

It carries out the reaction XMP + L-glutamine + ATP + H2O = GMP + L-glutamate + AMP + diphosphate + 2 H(+). It participates in purine metabolism; GMP biosynthesis; GMP from XMP (L-Gln route): step 1/1. Functionally, catalyzes the synthesis of GMP from XMP. The chain is GMP synthase [glutamine-hydrolyzing] from Blochmanniella floridana.